We begin with the raw amino-acid sequence, 277 residues long: MAVRGFKPTSPARRQMTVSTFEEITTDVPEKSLLVSLNNKAGRNNNGKITVRHRGGGNRNKYRLIDFKRNKDGVPAKVTTIEYDPNRSAYIALVVYADGEKRYIIAPTKLSVGDTVVSGPDADIKIGNALPIKNIPVGTVIHNVELAAGKGAQLVRAAGSSAQLMAKEGNYAQLRLPSGEMRYVRIECRATIGTVSNLTHDIVNIGKAGRKRHMGIRPTVRGSVMNPNDHPHGGGEGKSPVGRPGPVTPWGKPALGYKTRKNKKYSDKLIVKRRNDK.

Positions 215–277 (GIRPTVRGSV…KLIVKRRNDK (63 aa)) are disordered. Basic and acidic residues predominate over residues 264 to 277 (KYSDKLIVKRRNDK).

The protein belongs to the universal ribosomal protein uL2 family. Part of the 50S ribosomal subunit. Forms a bridge to the 30S subunit in the 70S ribosome.

Functionally, one of the primary rRNA binding proteins. Required for association of the 30S and 50S subunits to form the 70S ribosome, for tRNA binding and peptide bond formation. It has been suggested to have peptidyltransferase activity; this is somewhat controversial. Makes several contacts with the 16S rRNA in the 70S ribosome. The sequence is that of Large ribosomal subunit protein uL2 from Clostridium acetobutylicum (strain ATCC 824 / DSM 792 / JCM 1419 / IAM 19013 / LMG 5710 / NBRC 13948 / NRRL B-527 / VKM B-1787 / 2291 / W).